A 317-amino-acid polypeptide reads, in one-letter code: Ribose-phosphate pyrophosphokinase (317 aa).

ATP-binding positions include 43–45 (DGE) and 102–103 (RQ). The Mg(2+) site is built by histidine 136 and aspartate 175. The active site involves lysine 198. D-ribose 5-phosphate is bound by residues arginine 200, aspartate 224, and 228 to 232 (DTAGT).

It belongs to the ribose-phosphate pyrophosphokinase family. Class I subfamily. In terms of assembly, homohexamer. It depends on Mg(2+) as a cofactor.

It is found in the cytoplasm. The enzyme catalyses D-ribose 5-phosphate + ATP = 5-phospho-alpha-D-ribose 1-diphosphate + AMP + H(+). It functions in the pathway metabolic intermediate biosynthesis; 5-phospho-alpha-D-ribose 1-diphosphate biosynthesis; 5-phospho-alpha-D-ribose 1-diphosphate from D-ribose 5-phosphate (route I): step 1/1. In terms of biological role, involved in the biosynthesis of the central metabolite phospho-alpha-D-ribosyl-1-pyrophosphate (PRPP) via the transfer of pyrophosphoryl group from ATP to 1-hydroxyl of ribose-5-phosphate (Rib-5-P). The sequence is that of Ribose-phosphate pyrophosphokinase from Bacillus anthracis.